A 634-amino-acid polypeptide reads, in one-letter code: Chaperone protein HtpG (634 aa).

The interval 1-342 is a; substrate-binding; that stretch reads MTVDTDKQTL…SSDLSLNVSR (342 aa). The tract at residues 343 to 559 is b; sequence EILQSGPVVD…QGDLGLQMRQ (217 aa). The c stretch occupies residues 560 to 634; the sequence is LLEASGQAVP…LNKLLLELSV (75 aa).

Belongs to the heat shock protein 90 family. In terms of assembly, homodimer.

It is found in the cytoplasm. Molecular chaperone. Has ATPase activity. The polypeptide is Chaperone protein HtpG (Xanthomonas oryzae pv. oryzae (strain MAFF 311018)).